The following is a 389-amino-acid chain: Lipid-A-disaccharide synthase (389 aa).

This sequence belongs to the LpxB family.

The enzyme catalyses a lipid X + a UDP-2-N,3-O-bis[(3R)-3-hydroxyacyl]-alpha-D-glucosamine = a lipid A disaccharide + UDP + H(+). The protein operates within bacterial outer membrane biogenesis; LPS lipid A biosynthesis. In terms of biological role, condensation of UDP-2,3-diacylglucosamine and 2,3-diacylglucosamine-1-phosphate to form lipid A disaccharide, a precursor of lipid A, a phosphorylated glycolipid that anchors the lipopolysaccharide to the outer membrane of the cell. In Burkholderia cenocepacia (strain HI2424), this protein is Lipid-A-disaccharide synthase.